Consider the following 267-residue polypeptide: Acyl-[acyl-carrier-protein]--UDP-N-acetylglucosamine O-acyltransferase (267 aa).

Belongs to the transferase hexapeptide repeat family. LpxA subfamily. As to quaternary structure, homotrimer.

It localises to the cytoplasm. The enzyme catalyses a (3R)-hydroxyacyl-[ACP] + UDP-N-acetyl-alpha-D-glucosamine = a UDP-3-O-[(3R)-3-hydroxyacyl]-N-acetyl-alpha-D-glucosamine + holo-[ACP]. It participates in glycolipid biosynthesis; lipid IV(A) biosynthesis; lipid IV(A) from (3R)-3-hydroxytetradecanoyl-[acyl-carrier-protein] and UDP-N-acetyl-alpha-D-glucosamine: step 1/6. Involved in the biosynthesis of lipid A, a phosphorylated glycolipid that anchors the lipopolysaccharide to the outer membrane of the cell. The polypeptide is Acyl-[acyl-carrier-protein]--UDP-N-acetylglucosamine O-acyltransferase (Cupriavidus pinatubonensis (strain JMP 134 / LMG 1197) (Cupriavidus necator (strain JMP 134))).